The following is a 582-amino-acid chain: tRNA-guanine(15) transglycosylase (582 aa).

D95 serves as the catalytic Nucleophile. The substrate site is built by D130 and G196. C279, C281, and C284 together coordinate Zn(2+). Positions 507 to 582 constitute a PUA domain; it reads RMRVVVNKEA…RAVKVRKGVE (76 aa).

Belongs to the archaeosine tRNA-ribosyltransferase family. In terms of assembly, homodimer. Zn(2+) is required as a cofactor.

The enzyme catalyses guanosine(15) in tRNA + 7-cyano-7-deazaguanine = 7-cyano-7-carbaguanosine(15) in tRNA + guanine. It participates in tRNA modification; archaeosine-tRNA biosynthesis. In terms of biological role, exchanges the guanine residue with 7-cyano-7-deazaguanine (preQ0) at position 15 in the dihydrouridine loop (D-loop) of archaeal tRNAs. This Pyrococcus horikoshii (strain ATCC 700860 / DSM 12428 / JCM 9974 / NBRC 100139 / OT-3) protein is tRNA-guanine(15) transglycosylase (tgtA).